We begin with the raw amino-acid sequence, 467 residues long: Chromosomal replication initiator protein DnaA (467 aa).

The segment at 1 to 87 (MSSSLWLQCL…VGSRPVVAPK (87 aa)) is domain I, interacts with DnaA modulators. The tract at residues 87-130 (KPAPVRTAADVAAESSAPAQLAQRKPIHKTWDDDSAAADITHRS) is domain II. The tract at residues 131 to 347 (NVNPKHKFNN…GALNRVIANA (217 aa)) is domain III, AAA+ region. ATP contacts are provided by Gly175, Gly177, Lys178, and Thr179. The domain IV, binds dsDNA stretch occupies residues 348 to 467 (NFTGRPITID…YSNLIRTLSS (120 aa)).

This sequence belongs to the DnaA family. As to quaternary structure, oligomerizes as a right-handed, spiral filament on DNA at oriC.

It is found in the cytoplasm. In terms of biological role, plays an essential role in the initiation and regulation of chromosomal replication. ATP-DnaA binds to the origin of replication (oriC) to initiate formation of the DNA replication initiation complex once per cell cycle. Binds the DnaA box (a 9 base pair repeat at the origin) and separates the double-stranded (ds)DNA. Forms a right-handed helical filament on oriC DNA; dsDNA binds to the exterior of the filament while single-stranded (ss)DNA is stabiized in the filament's interior. The ATP-DnaA-oriC complex binds and stabilizes one strand of the AT-rich DNA unwinding element (DUE), permitting loading of DNA polymerase. After initiation quickly degrades to an ADP-DnaA complex that is not apt for DNA replication. Binds acidic phospholipids. This Vibrio cholerae serotype O1 (strain ATCC 39315 / El Tor Inaba N16961) protein is Chromosomal replication initiator protein DnaA.